Consider the following 572-residue polypeptide: Golgi apyrase (572 aa).

Residues 1 to 470 (MVRKYGIFID…KHWMRLFPNK (470 aa)) are Lumenal-facing. Glu145 acts as the Proton acceptor in catalysis. The helical transmembrane segment at 471–491 (LFFILSFIFCLFFLFSLVLFG) threads the bilayer. Residues 492 to 572 (YDPKRRQRFK…RERTPRSPFP (81 aa)) are Cytoplasmic-facing.

This sequence belongs to the GDA1/CD39 NTPase family. The cofactor is Ca(2+). Mg(2+) is required as a cofactor. Mn(2+) serves as cofactor.

The protein localises to the golgi apparatus. The protein resides in the membrane. The enzyme catalyses a ribonucleoside 5'-triphosphate + 2 H2O = a ribonucleoside 5'-phosphate + 2 phosphate + 2 H(+). It functions in the pathway protein modification; protein glycosylation. Catalyzes the hydrolysis of phosphoanhydride bonds of nucleoside tri- and di-phosphates. Required for Golgi glycosylation and cell wall integrity. Involved in N-mannosylation of proteins in Golgi. The sequence is that of Golgi apyrase from Schizosaccharomyces pombe (strain 972 / ATCC 24843) (Fission yeast).